The chain runs to 376 residues: Transmembrane protein 183A (376 aa).

2 disordered regions span residues 1 to 20 (MARG…AMPK) and 100 to 127 (MDAQ…ELDG). Residues 300 to 320 (LNFIFIPIVMGMIFTLFTINV) traverse the membrane as a helical segment.

This sequence belongs to the TMEM183 family.

It localises to the membrane. In Homo sapiens (Human), this protein is Transmembrane protein 183A (TMEM183A).